The chain runs to 313 residues: Probable alpha-L-glutamate ligase (313 aa).

The ATP-grasp domain maps to 112–294; it reads LQMLMAQGIA…IALQMIVHLE (183 aa). Residues Lys-148, 185–186, Asp-194, and 218–220 each bind ATP; these read EF and RAN. Mg(2+) is bound by residues Asp-255, Glu-267, and Asn-269. 3 residues coordinate Mn(2+): Asp-255, Glu-267, and Asn-269.

It belongs to the RimK family. It depends on Mg(2+) as a cofactor. Mn(2+) is required as a cofactor.

This Pasteurella multocida (strain Pm70) protein is Probable alpha-L-glutamate ligase.